The following is a 321-amino-acid chain: Methionine import ATP-binding protein MetN (321 aa).

In terms of domain architecture, ABC transporter spans 2–237 (ISIKNVNKYY…NTKGLRKLIG (236 aa)). Residue 34 to 41 (GHSGAGKS) coordinates ATP.

Belongs to the ABC transporter superfamily. Methionine importer (TC 3.A.1.24) family. The complex is composed of two ATP-binding proteins (MetN), two transmembrane proteins (MetI) and a solute-binding protein (MetQ).

The protein resides in the cell membrane. It catalyses the reaction L-methionine(out) + ATP + H2O = L-methionine(in) + ADP + phosphate + H(+). The enzyme catalyses D-methionine(out) + ATP + H2O = D-methionine(in) + ADP + phosphate + H(+). Functionally, part of the ABC transporter complex MetNIQ involved in methionine import. Responsible for energy coupling to the transport system. This chain is Methionine import ATP-binding protein MetN, found in Clostridioides difficile (strain 630) (Peptoclostridium difficile).